A 423-amino-acid polypeptide reads, in one-letter code: UPF0597 protein CTC_02309 (423 aa).

It belongs to the UPF0597 family.

The protein is UPF0597 protein CTC_02309 of Clostridium tetani (strain Massachusetts / E88).